The primary structure comprises 478 residues: Hepatitis A virus cellular receptor 1 (478 aa).

Residues M1–A24 form the signal peptide. The region spanning D25–S126 is the Ig-like V-type domain. The Extracellular segment spans residues D25–G397. 3 disulfide bridges follow: C41–C110, C51–C62, and C57–C109. Residues N70 and N87 are each glycosylated (N-linked (GlcNAc...) asparagine). 28 repeat units span residues V148–T155, L156–T161, L162–T167, L168–T173, L174–T179, L180–T185, L186–T191, V192–T197, L198–T201, L202–T207, L208–T211, L212–T217, L218–T221, L222–T227, L228–T233, L234–T239, L240–T245, L246–T251, L252–T257, L258–T263, L264–T268, L269–T273, L274–T279, L280–T285, L286–T291, L292–T297, L298–T303, and L304–M309. The interval V148–M309 is 28 X 6 AA approximate tandem repeats of L-P-[MT]-T-[MT]-T. The interval P187–T303 is disordered. 2 disordered regions span residues P320–T339 and L344–E370. Positions T348–E370 are enriched in polar residues. N-linked (GlcNAc...) asparagine glycans are attached at residues N379 and N393. Residues I398–A418 traverse the membrane as a helical segment. Residues K419–P478 lie on the Cytoplasmic side of the membrane.

It belongs to the immunoglobulin superfamily. TIM family. As to quaternary structure, interacts with STAM. Interacts with SELPLG.

The protein resides in the cell membrane. Functionally, phosphatidylserine receptor that plays an important functional role in regulatory B-cells homeostasis including generation, expansion and suppressor functions. As P-selectin/SELPLG ligand, plays a specialized role in activated but not naive T-cell trafficking during inflammatory responses. Controls thereby T-cell accumulation in the inflamed central nervous system (CNS) and the induction of autoimmune disease. Also regulates expression of various anti-inflammatory cytokines and co-inhibitory ligands including IL10. Acts as a regulator of T-cell proliferation. May play a role in kidney injury and repair. The sequence is that of Hepatitis A virus cellular receptor 1 (HAVCR1) from Chlorocebus aethiops (Green monkey).